Reading from the N-terminus, the 1200-residue chain is SR-related and CTD-associated factor 4 (1200 aa).

Residues 1–139 enclose the CID domain; sequence MDAVNAFNQE…PLLDMAAGTS (139 aa). At K49 the chain carries N6-acetyllysine. Polar residues predominate over residues 140 to 153; the sequence is NAAPGAENVTNNEG. Disordered regions lie at residues 140–172, 299–324, and 346–566; these read NAAP…PTNS, VPAS…MQQP, and SMQH…QIKS. S154 carries the phosphoserine modification. Pro residues-rich tracts occupy residues 367 to 390 and 399 to 461; these read APPP…PGMP and LPQP…PPVQ. Over residues 462–471 the composition is skewed to low complexity; sequence PTFQPTFQPQ. The span at 493–503 shows a compositional bias: basic and acidic residues; that stretch reads EVKRHVPESRK. The span at 504–541 shows a compositional bias: basic residues; sequence SRSRSPKRRRSRSGSRSRRSRHRRSRSRSRDRRRHSPR. Residues 543–558 show a composition bias toward basic and acidic residues; it reads RSQERRDREKERERRQ. The 75-residue stretch at 574–648 folds into the RRM domain; sequence TTLWVGQLDK…KSIKIAWALN (75 aa). 3 disordered regions span residues 696–724, 834–875, and 927–1200; these read WKGI…VSPI, VSGA…SLLG, and PPHM…EAPR. A Phosphoserine modification is found at S722. Composition is skewed to pro residues over residues 856-868 and 927-958; these read PAAP…PPVT and PPHM…PPHG. Residues 965 to 978 are compositionally biased toward gly residues; sequence GMPGLGGPGPGPGG. Residues 986–1036 show a composition bias toward low complexity; that stretch reads QQQPQQQQQQQQQQQQQQQQQQQQPPPQQSQTQQQPAPSQQPAPAQQQPQQ. S1058 carries the post-translational modification Phosphoserine. Residues 1063–1139 are compositionally biased toward basic and acidic residues; that stretch reads VENDRERYGS…RGKEKHEVAD (77 aa). The span at 1153–1162 shows a compositional bias: polar residues; that stretch reads QVGNTDTVSE. Residue S1178 is modified to Phosphoserine.

Interacts with POLR2A; via C-terminal heptapeptide repeat domain (CTD) phosphorylated at 'Ser-2' and 'Ser-5'.

It localises to the nucleus. Its function is as follows. Anti-terminator protein required to prevent early mRNA termination during transcription. Together with SCAF8, acts by suppressing the use of early, alternative poly(A) sites, thereby preventing the accumulation of non-functional truncated proteins. Mechanistically, associates with the phosphorylated C-terminal heptapeptide repeat domain (CTD) of the largest RNA polymerase II subunit (POLR2A), and subsequently binds nascent RNA upstream of early polyadenylation sites to prevent premature mRNA transcript cleavage and polyadenylation. Independently of SCAF8, also acts as a suppressor of transcriptional readthrough. The chain is SR-related and CTD-associated factor 4 from Rattus norvegicus (Rat).